Reading from the N-terminus, the 62-residue chain is Sperm histone P2a (62 aa).

It belongs to the protamine P2 family. Proteolytic processing into mature chains is required for histone eviction during spermatogenesis. Transition proteins (TNP1 and TNP2) are required for processing. Testis.

The protein localises to the nucleus. It is found in the chromosome. In terms of biological role, protamines substitute for histones in the chromatin of sperm during the haploid phase of spermatogenesis. They compact sperm DNA into a highly condensed, stable and inactive complex. This chain is Sperm histone P2a, found in Equus caballus (Horse).